The sequence spans 142 residues: uncharacterized protein (142 aa).

The disordered stretch occupies residues 19-54; the sequence is IHTTPHPHTPHHTHHTHTTPTPTPHPHTHTPTPERS. Basic residues predominate over residues 26 to 35; that stretch reads HTPHHTHHTH.

This is an uncharacterized protein from Saccharomyces cerevisiae (strain ATCC 204508 / S288c) (Baker's yeast).